We begin with the raw amino-acid sequence, 88 residues long: U1-hexatoxin-Iw1c (88 aa).

A signal peptide spans 1–17; it reads LKFVVLICLVIMASTSA. Gln-18 is modified (pyrrolidone carboxylic acid). Intrachain disulfides connect Cys-20/Cys-31, Cys-25/Cys-39, Cys-30/Cys-65, Cys-49/Cys-73, and Cys-67/Cys-80. A propeptide spanning residues 86-88 is cleaved from the precursor; that stretch reads RSE.

The protein belongs to the MIT-like AcTx family. As to expression, expressed by the venom gland.

The protein localises to the secreted. This Illawarra wisharti (Illawarra funnel-web spider) protein is U1-hexatoxin-Iw1c.